A 1055-amino-acid polypeptide reads, in one-letter code: Elongation factor 3 (1055 aa).

Position 45 (Val-45) interacts with ADP. HEAT repeat units lie at residues 48-86 (FTQIGFNDAIVKALNDKKSQSAREGACEVISTLCENGAA), 96-133 (SAENTPFPALLEAFADKVAAVKTAAIAAVKAIVQSMNP), 134-172 (WASFVLLPALLNLIRTSGKWQIKAGSLEILQQLITSAPF), 176-213 (EAMPDLVPVLAEAVWDTKSDVKKAAKATLEKAVSLVEN), 218-255 (KFVPALVKSLLNPIEEVPKTISLLSATTFVSEVTAPTI), 257-290 (LIAPLLIRGLDERPTATKRKVCVIADNMSKLVDS), and 296-337 (PFLP…VPAE). ABC transporter domains are found at residues 447-659 (CNIE…SYYQ) and 687-1004 (LKMR…KKAA). The ADP site is built by Asn-723, Glu-933, Asn-936, and His-962. The interval 1024–1055 (EKKLSAADKRKAKKDRMARRKRGEEVFSDEEL) is disordered. The span at 1033–1044 (RKAKKDRMARRK) shows a compositional bias: basic residues.

The protein belongs to the ABC transporter superfamily. ABCF family. EF3 subfamily. As to quaternary structure, interacts with CCH1; the interaction is direct and required for the localization of CCH1 to the cell membrane.

It localises to the cytoplasm. The protein resides in the cytosol. It carries out the reaction ATP + H2O = ADP + phosphate + H(+). It functions in the pathway protein biosynthesis; polypeptide chain elongation. Its function is as follows. Ribosome-dependent ATPase that functions in cytoplasmic translation elongation. Required for the ATP-dependent release of deacylated tRNA from the ribosomal E-site during protein biosynthesis. Stimulates the eEF1A-dependent binding of aminoacyl-tRNA to the ribosomal A-site, which has reduced affinity for tRNA as long as the E-site is occupied. Assists translation termination by stimulating the release of nascent protein from the ribosome by release factors. Appears to localize calcium-channel protein CCH1 to the plasma membrane. This Cryptococcus neoformans var. grubii serotype A (strain H99 / ATCC 208821 / CBS 10515 / FGSC 9487) (Filobasidiella neoformans var. grubii) protein is Elongation factor 3.